Consider the following 180-residue polypeptide: Large ribosomal subunit protein uL5 (180 aa).

The protein belongs to the universal ribosomal protein uL5 family. As to quaternary structure, part of the 50S ribosomal subunit; part of the 5S rRNA/L5/L18/L25 subcomplex. Contacts the 5S rRNA and the P site tRNA. Forms a bridge to the 30S subunit in the 70S ribosome.

Functionally, this is one of the proteins that bind and probably mediate the attachment of the 5S RNA into the large ribosomal subunit, where it forms part of the central protuberance. In the 70S ribosome it contacts protein S13 of the 30S subunit (bridge B1b), connecting the 2 subunits; this bridge is implicated in subunit movement. Contacts the P site tRNA; the 5S rRNA and some of its associated proteins might help stabilize positioning of ribosome-bound tRNAs. The polypeptide is Large ribosomal subunit protein uL5 (Stenotrophomonas maltophilia (strain K279a)).